We begin with the raw amino-acid sequence, 333 residues long: Glyceraldehyde-3-phosphate dehydrogenase (333 aa).

Residues 11-12 (RI), D32, and R77 each bind NAD(+). D-glyceraldehyde 3-phosphate-binding positions include 148-150 (SCT), T179, 208-209 (TG), and R231. C149 (nucleophile) is an active-site residue. N313 contacts NAD(+).

This sequence belongs to the glyceraldehyde-3-phosphate dehydrogenase family. Homotetramer.

The protein localises to the cytoplasm. It catalyses the reaction D-glyceraldehyde 3-phosphate + phosphate + NAD(+) = (2R)-3-phospho-glyceroyl phosphate + NADH + H(+). It participates in carbohydrate degradation; glycolysis; pyruvate from D-glyceraldehyde 3-phosphate: step 1/5. The protein is Glyceraldehyde-3-phosphate dehydrogenase (Gapdh) of Glossina morsitans morsitans (Savannah tsetse fly).